Here is a 266-residue protein sequence, read N- to C-terminus: Hydroxyacylglutathione hydrolase (266 aa).

Residues H53, H55, D57, H58, H118, D140, and H178 each contribute to the Zn(2+) site.

The protein belongs to the metallo-beta-lactamase superfamily. Glyoxalase II family. As to quaternary structure, monomer. The cofactor is Zn(2+).

The enzyme catalyses an S-(2-hydroxyacyl)glutathione + H2O = a 2-hydroxy carboxylate + glutathione + H(+). It functions in the pathway secondary metabolite metabolism; methylglyoxal degradation; (R)-lactate from methylglyoxal: step 2/2. Its function is as follows. Thiolesterase that catalyzes the hydrolysis of S-D-lactoyl-glutathione to form glutathione and D-lactic acid. This Cupriavidus metallidurans (strain ATCC 43123 / DSM 2839 / NBRC 102507 / CH34) (Ralstonia metallidurans) protein is Hydroxyacylglutathione hydrolase.